The following is a 304-amino-acid chain: D-alanine--D-alanine ligase (304 aa).

The ATP-grasp domain occupies 104–299 (KMVWLSCGLP…FEALCLAILA (196 aa)). 130–185 (ARDLGLPIFVKPVHEGSSMGATKVTEAGQLRAAWELAARYDSLVIAEEFISGQELT) is a binding site for ATP. The Mg(2+) site is built by aspartate 253, glutamate 266, and asparagine 268.

This sequence belongs to the D-alanine--D-alanine ligase family. The cofactor is Mg(2+). Mn(2+) is required as a cofactor.

Its subcellular location is the cytoplasm. The enzyme catalyses 2 D-alanine + ATP = D-alanyl-D-alanine + ADP + phosphate + H(+). Its pathway is cell wall biogenesis; peptidoglycan biosynthesis. Cell wall formation. The protein is D-alanine--D-alanine ligase of Azoarcus sp. (strain BH72).